The primary structure comprises 370 residues: Glutamine synthetase (370 aa).

The GS beta-grasp domain maps to 23–102 (VLAEYVWIDA…VLTECWNNDG (80 aa)). A disordered region spans residues 40–69 (CKTLDKKPSSVEDLPEWNFDGSSTGQAPGH). The GS catalytic domain occupies 109–370 (HRHESAKLMK…FKEYARESSD (262 aa)).

It belongs to the glutamine synthetase family. In terms of assembly, homooctamer.

It is found in the cytoplasm. It catalyses the reaction L-glutamate + NH4(+) + ATP = L-glutamine + ADP + phosphate + H(+). This Debaryomyces hansenii (strain ATCC 36239 / CBS 767 / BCRC 21394 / JCM 1990 / NBRC 0083 / IGC 2968) (Yeast) protein is Glutamine synthetase (GLN1).